We begin with the raw amino-acid sequence, 633 residues long: ATP-dependent RNA helicase mss116, mitochondrial (633 aa).

The N-terminal 32 residues, 1–32 (MKTGRTRPLRVFDILVPPWPPTVPHRIKLPRG), are a transit peptide targeting the mitochondrion. The Q motif motif lies at 38 to 66 (EFYSAITRNWNKLKGLKNCWQIWKDVQEI). The region spanning 70 to 248 (IRKYQGESTV…TAEKLSNIQT (179 aa)) is the Helicase ATP-binding domain. Residue 83 to 90 (PGNNDGAH) coordinates ATP. Positions 195–198 (RPLE) match the DEAD box motif. Residues 262–429 (FLADVKRILQ…NVDLVIQVGL (168 aa)) enclose the Helicase C-terminal domain. The interval 567–633 (FNYATGNDLN…GGRGGKPRAA (67 aa)) is disordered.

Belongs to the DEAD box helicase family. DDX18/HAS1 subfamily.

It is found in the mitochondrion matrix. The catalysed reaction is ATP + H2O = ADP + phosphate + H(+). ATP-dependent RNA helicase required for mitochondrial splicing of group I and II introns. Also required for efficient mitochondrial translation. This chain is ATP-dependent RNA helicase mss116, mitochondrial (mss116), found in Aspergillus oryzae (strain ATCC 42149 / RIB 40) (Yellow koji mold).